Consider the following 322-residue polypeptide: uncharacterized protein (322 aa).

The disordered stretch occupies residues 269–289 (QDEEEEPRDERRPRRRLGKAQ).

This is an uncharacterized protein from Sinorhizobium fredii (strain NBRC 101917 / NGR234).